The sequence spans 125 residues: Aspartate 1-decarboxylase (125 aa).

Catalysis depends on serine 25, which acts as the Schiff-base intermediate with substrate; via pyruvic acid. At serine 25 the chain carries Pyruvic acid (Ser). Threonine 57 contributes to the substrate binding site. The Proton donor role is filled by tyrosine 58. 73–75 (GAA) is a substrate binding site.

The protein belongs to the PanD family. In terms of assembly, heterooctamer of four alpha and four beta subunits. It depends on pyruvate as a cofactor. Is synthesized initially as an inactive proenzyme, which is activated by self-cleavage at a specific serine bond to produce a beta-subunit with a hydroxyl group at its C-terminus and an alpha-subunit with a pyruvoyl group at its N-terminus.

It localises to the cytoplasm. The enzyme catalyses L-aspartate + H(+) = beta-alanine + CO2. The protein operates within cofactor biosynthesis; (R)-pantothenate biosynthesis; beta-alanine from L-aspartate: step 1/1. Its function is as follows. Catalyzes the pyruvoyl-dependent decarboxylation of aspartate to produce beta-alanine. In Herpetosiphon aurantiacus (strain ATCC 23779 / DSM 785 / 114-95), this protein is Aspartate 1-decarboxylase.